Reading from the N-terminus, the 538-residue chain is Hydroxylamine reductase (538 aa).

Residues cysteine 3, cysteine 6, cysteine 15, and cysteine 21 each coordinate [4Fe-4S] cluster. Residues histidine 239, glutamate 263, cysteine 307, cysteine 394, cysteine 422, cysteine 447, glutamate 481, and lysine 483 each coordinate hybrid [4Fe-2O-2S] cluster. At cysteine 394 the chain carries Cysteine persulfide.

This sequence belongs to the HCP family. It depends on [4Fe-4S] cluster as a cofactor. The cofactor is hybrid [4Fe-2O-2S] cluster.

The protein localises to the cytoplasm. It carries out the reaction A + NH4(+) + H2O = hydroxylamine + AH2 + H(+). In terms of biological role, catalyzes the reduction of hydroxylamine to form NH(3) and H(2)O. This chain is Hydroxylamine reductase, found in Solidesulfovibrio magneticus (strain ATCC 700980 / DSM 13731 / RS-1) (Desulfovibrio magneticus).